Reading from the N-terminus, the 474-residue chain is Glycogen synthase (474 aa).

K15 is an ADP-alpha-D-glucose binding site.

Belongs to the glycosyltransferase 1 family. Bacterial/plant glycogen synthase subfamily.

It catalyses the reaction [(1-&gt;4)-alpha-D-glucosyl](n) + ADP-alpha-D-glucose = [(1-&gt;4)-alpha-D-glucosyl](n+1) + ADP + H(+). The protein operates within glycan biosynthesis; glycogen biosynthesis. In terms of biological role, synthesizes alpha-1,4-glucan chains using ADP-glucose. The protein is Glycogen synthase of Chlamydia trachomatis serovar D (strain ATCC VR-885 / DSM 19411 / UW-3/Cx).